A 91-amino-acid polypeptide reads, in one-letter code: MTNQNQSQTQTTQTVEKVSSRQKKKKRVCSFCVERIYDIDYKDVNRLKKFLTERGKIMPRRTTGNCARHQRQLTRAIKRARILALLPFIVE.

Positions 1-14 (MTNQNQSQTQTTQT) are enriched in low complexity. A disordered region spans residues 1 to 24 (MTNQNQSQTQTTQTVEKVSSRQKK).

The protein belongs to the bacterial ribosomal protein bS18 family. In terms of assembly, part of the 30S ribosomal subunit. Forms a tight heterodimer with protein bS6.

In terms of biological role, binds as a heterodimer with protein bS6 to the central domain of the 16S rRNA, where it helps stabilize the platform of the 30S subunit. This Caldicellulosiruptor saccharolyticus (strain ATCC 43494 / DSM 8903 / Tp8T 6331) protein is Small ribosomal subunit protein bS18.